The following is a 773-amino-acid chain: DNA polymerase (773 aa).

The tract at residues 1 to 131 is N-terminal domain; the sequence is MILDADYITE…IDRGLIPMEG (131 aa). The exonuclease domain stretch occupies residues 133-385; it reads EELRMLAFDI…ELARRTESYA (253 aa). Aspartate 141, glutamate 143, and aspartate 315 together coordinate Mg(2+). Positions 390–773 are polymerase domain; it reads KEPEKGLWEN…GLGAWLKPKT (384 aa). 2 disulfides stabilise this stretch: cysteine 428–cysteine 442 and cysteine 506–cysteine 509.

Belongs to the DNA polymerase type-B family. Requires Mg(2+) as cofactor.

The enzyme catalyses DNA(n) + a 2'-deoxyribonucleoside 5'-triphosphate = DNA(n+1) + diphosphate. DNA polymerase activity strongly inhibited by uracil-containing oligonucleotides. In terms of biological role, thermostable DNA polymerase. In addition to polymerase activity, this DNA polymerase exhibits 3' to 5' exonuclease activity. The protein is DNA polymerase (pol) of Desulfurococcus sp. (strain Tok).